Consider the following 459-residue polypeptide: Putrescine aminotransferase (459 aa).

Residues Gly150–Thr151 and Gln274 each bind pyridoxal 5'-phosphate. At Lys300 the chain carries N6-(pyridoxal phosphate)lysine. Thr332 lines the pyridoxal 5'-phosphate pocket.

This sequence belongs to the class-III pyridoxal-phosphate-dependent aminotransferase family. Putrescine aminotransferase subfamily. Pyridoxal 5'-phosphate serves as cofactor.

It catalyses the reaction an alkane-alpha,omega-diamine + 2-oxoglutarate = an omega-aminoaldehyde + L-glutamate. The catalysed reaction is putrescine + 2-oxoglutarate = 1-pyrroline + L-glutamate + H2O. The enzyme catalyses cadaverine + 2-oxoglutarate = 5-aminopentanal + L-glutamate. It functions in the pathway amine and polyamine degradation; putrescine degradation; 4-aminobutanal from putrescine (transaminase route): step 1/1. Catalyzes the aminotransferase reaction from putrescine to 2-oxoglutarate, leading to glutamate and 4-aminobutanal, which spontaneously cyclizes to form 1-pyrroline. This is the first step in one of two pathways for putrescine degradation, where putrescine is converted into 4-aminobutanoate (gamma-aminobutyrate or GABA) via 4-aminobutanal. Also functions as a cadaverine transaminase in a a L-lysine degradation pathway to succinate that proceeds via cadaverine, glutarate and L-2-hydroxyglutarate. The protein is Putrescine aminotransferase of Escherichia coli O6:K15:H31 (strain 536 / UPEC).